Consider the following 151-residue polypeptide: Deoxyuridine 5'-triphosphate nucleotidohydrolase (151 aa).

Substrate contacts are provided by residues Arg70 to Gly72, Asn83, Leu87 to Asp89, and Met97.

It belongs to the dUTPase family. In terms of assembly, homotrimer. The cofactor is Mg(2+).

The enzyme catalyses dUTP + H2O = dUMP + diphosphate + H(+). Its pathway is pyrimidine metabolism; dUMP biosynthesis; dUMP from dCTP (dUTP route): step 2/2. This enzyme is involved in nucleotide metabolism: it produces dUMP, the immediate precursor of thymidine nucleotides and it decreases the intracellular concentration of dUTP so that uracil cannot be incorporated into DNA. This is Deoxyuridine 5'-triphosphate nucleotidohydrolase from Escherichia fergusonii (strain ATCC 35469 / DSM 13698 / CCUG 18766 / IAM 14443 / JCM 21226 / LMG 7866 / NBRC 102419 / NCTC 12128 / CDC 0568-73).